Reading from the N-terminus, the 334-residue chain is Endoplasmic reticulum junction formation protein lunapark (334 aa).

The Cytoplasmic portion of the chain corresponds to 1 to 40; sequence MGWFFQKKKEFDFGGELDRLEMKLEEAQYNIDNIQSQKKK. The stretch at 12 to 42 forms a coiled coil; the sequence is DFGGELDRLEMKLEEAQYNIDNIQSQKKKIL. Residues 41–61 form a helical membrane-spanning segment; the sequence is ILFRYTVCSLAIYTIGMAVWA. Topologically, residues 62-78 are lumenal; it reads SRSSILFQHPLFSKLFR. Residues 79–99 traverse the membrane as a helical segment; that stretch reads ISLYILGVFSLYMFRWAIAWF. Residues 99–127 adopt a coiled-coil conformation; sequence FCEKRLSRARMNLHKLNAEKRKILDALKS. The Cytoplasmic portion of the chain corresponds to 100 to 334; sequence CEKRLSRARM…SVPESLTPTK (235 aa). The segment at 201-227 adopts a C4-type; plays a role in ER morphology zinc-finger fold; it reads CSHCFHHNGLASYGEKASDVRYVCLFC. A disordered region spans residues 237–315; the sequence is KSLPSSEMDS…SSPDASYNSV (79 aa). Residues 239–252 show a composition bias toward polar residues; the sequence is LPSSEMDSNLQTNP. The segment covering 253–270 has biased composition (low complexity); sequence SSISKGKKNNSNNTTQKG. The segment covering 273–283 has biased composition (polar residues); the sequence is IISSPQVINAS. Serine 284 carries the post-translational modification Phosphoserine. A compositionally biased stretch (low complexity) spans 297 to 315; the sequence is ALPTSPLSSSSPDASYNSV.

This sequence belongs to the lunapark family.

The protein resides in the endoplasmic reticulum membrane. The protein localises to the golgi apparatus membrane. Plays a role in tubular endoplasmic reticulum network formation and maintenance. The sequence is that of Endoplasmic reticulum junction formation protein lunapark (lnp1) from Schizosaccharomyces pombe (strain 972 / ATCC 24843) (Fission yeast).